A 97-amino-acid chain; its full sequence is DNA-directed RNA polymerase subunit omega (97 aa).

It belongs to the RNA polymerase subunit omega family. In terms of assembly, the RNAP catalytic core consists of 2 alpha, 1 beta, 1 beta' and 1 omega subunit. When a sigma factor is associated with the core the holoenzyme is formed, which can initiate transcription.

The catalysed reaction is RNA(n) + a ribonucleoside 5'-triphosphate = RNA(n+1) + diphosphate. In terms of biological role, promotes RNA polymerase assembly. Latches the N- and C-terminal regions of the beta' subunit thereby facilitating its interaction with the beta and alpha subunits. The sequence is that of DNA-directed RNA polymerase subunit omega from Coxiella burnetii (strain CbuK_Q154) (Coxiella burnetii (strain Q154)).